Reading from the N-terminus, the 99-residue chain is C-C motif chemokine 17 (99 aa).

Residues 1–23 (MIPLKMLLLVTLLLGASLQVTHA) form the signal peptide. Disulfide bonds link Cys33/Cys57 and Cys34/Cys73.

It belongs to the intercrine beta (chemokine CC) family. Expressed in thymus, spleen, lymph node, lung and heart.

The protein localises to the secreted. Chemokine, which displays chemotactic activity for T lymphocytes, preferentially Th2 cells, but not monocytes or granulocytes. Therefore plays an important role in a wide range of inflammatory and immunological processes. Acts by binding to CCR4 at T-cell surface. Mediates GM-CSF/CSF2-driven pain and inflammation. In the brain, required to maintain the typical, highly branched morphology of hippocampal microglia under homeostatic conditions. May be important for the appropriate adaptation of microglial morphology and synaptic plasticity to acute lipopolysaccharide (LPS)-induced neuroinflammation. Plays a role in wound healing, mainly by inducing fibroblast migration into the wound. This Canis lupus familiaris (Dog) protein is C-C motif chemokine 17 (CCL17).